A 2035-amino-acid polypeptide reads, in one-letter code: Ral GTPase-activating protein subunit alpha-1 (2035 aa).

2 disordered regions span residues 343-384 (LVSR…SSLC) and 477-496 (DGEK…VRNS). Basic and acidic residues predominate over residues 345 to 365 (SREESKNDTVDKVDKSAEPEQ). Polar residues-rich tracts occupy residues 366–384 (SHSN…SSLC) and 486–496 (GTSTSEHVRNS). Residues S710 and S720 each carry the phosphoserine modification. A disordered region spans residues 714-752 (SFSRGWSRDQPGQAPMRQRSATTTGSPGTEKARSIVRQK). T753 bears the Phosphothreonine mark. Phosphoserine is present on S772. T777 carries the post-translational modification Phosphothreonine. At S796 the chain carries Phosphoserine. Residues 807–817 (ERAKVNKEDTS) are compositionally biased toward basic and acidic residues. Disordered stretches follow at residues 807–834 (ERAK…SANV) and 848–911 (SGNA…SHSD). 2 stretches are compositionally biased toward polar residues: residues 824–833 (NSETGGNSAN) and 849–862 (GNAS…SSPG). Phosphoserine occurs at positions 859, 860, and 863. Positions 894–911 (SPASAGSSDLMSSDSHSD) are enriched in low complexity. Phosphoserine occurs at positions 985, 989, 993, and 999. Positions 986–1008 (ESASPVHSALGSRSQTPSPSTLS) are enriched in polar residues. The segment at 986–1011 (ESASPVHSALGSRSQTPSPSTLSRAH) is disordered. T1001 is subject to Phosphothreonine. Residues S1003 and S1477 each carry the phosphoserine modification. Residues 1326 to 2035 (FTNKTVAHVA…YHHFPADADH (710 aa)) are minimal domain that binds to TCF3/E12. The stretch at 1713–1748 (SEKQENDVINAILKQYTEEKEFVEKHFNDLNMKASE) forms a coiled coil. Residues 1795-2003 (LRNLDSRQCR…EERARYLQTI (209 aa)) enclose the Rap-GAP domain.

In terms of assembly, component of the heterodimeric RalGAP1 complex with RALGAPB. Heterodimerization is required for activity. Interacts with the HLH region of TCF3/isoform E12. In terms of tissue distribution, expressed during embryogenesis. Expressed in the adult brain, particularly in neurons of the cortex and hippocampus.

The protein resides in the cytoplasm. It localises to the nucleus. Functionally, catalytic subunit of the heterodimeric RalGAP1 complex which acts as a GTPase activator for the Ras-like small GTPases RALA and RALB. May interact with the HLH region of TCF3/isoform E12. This chain is Ral GTPase-activating protein subunit alpha-1 (Ralgapa1), found in Mus musculus (Mouse).